We begin with the raw amino-acid sequence, 73 residues long: Antimicrobial peptide 143 (73 aa).

A signal peptide spans 1 to 22 (MKVKCLLAVFLIVLIAAEHCQA). At K38 the chain carries Lysine amide. The propeptide occupies 44 to 73 (ELGTQFRPQQKNFMRREIDLERLFAEMPDY).

This sequence belongs to the non-disulfide-bridged peptide (NDBP) superfamily. Short antimicrobial peptide (group 4) family. As to expression, expressed by the venom gland.

Its subcellular location is the secreted. It localises to the target cell membrane. In terms of biological role, cationic host defense peptide that have antibacterial activity by breaking membranes. Is more effective on Gram-positive than on Gram-negative bacteria. In Lychas mucronatus (Chinese swimming scorpion), this protein is Antimicrobial peptide 143.